The following is an 87-amino-acid chain: HssA/B-like protein 54 (87 aa).

Belongs to the hssA/B family.

In Dictyostelium discoideum (Social amoeba), this protein is HssA/B-like protein 54 (hssl54).